The primary structure comprises 298 residues: Glyoxalase domain-containing protein 4 (298 aa).

A VOC 1 domain is found at 5–130 (RALHFVFKVK…GGYKFYLQDR (126 aa)). The residue at position 109 (Lys-109) is an N6-succinyllysine. Ser-131 is modified (phosphoserine). Residues 137–258 (PVLKVTLAVS…DGHEICFVGD (122 aa)) enclose the VOC 2 domain. At Lys-273 the chain carries N6-succinyllysine.

The protein belongs to the glyoxalase I family. Interacts with NUDT9.

Its subcellular location is the mitochondrion. The sequence is that of Glyoxalase domain-containing protein 4 (Glod4) from Mus musculus (Mouse).